Reading from the N-terminus, the 289-residue chain is MTTPTLDLAIITGLSGAGRSTAAKCLEDLGWFVVDNLPPALLSTMAELGHRSGGAVSRIGVVVDVRGRAFFSDLRAAIAALDARGMHPRMLFLEASDDALIRRFDHVRRPHPLQGDERVVDGIGRERALLAELRGEADLVLDTTDLNVHELRSKIDAAFGQPGANRLNATVVSFGYKYGLPLDADLVADCRFLPNPHWVEELRPYTGRDPQVRSYVLAQPGAQEFLDQYAALLRLVGEGYAREGKRYLTLAVGCTGGKHRSVAMAEQLGARLAADGVGVRVVHRDLGRE.

Residue G13 to S20 coordinates ATP. A GTP-binding site is contributed by D64 to G67.

It belongs to the RapZ-like family.

In terms of biological role, displays ATPase and GTPase activities. This chain is Nucleotide-binding protein FRAAL4592, found in Frankia alni (strain DSM 45986 / CECT 9034 / ACN14a).